The following is a 947-amino-acid chain: Zinc finger CCCH domain-containing protein 18 (947 aa).

M1 bears the N-acetylmethionine mark. 3 disordered regions span residues M1–T218, G275–A295, and Y387–R921. Phosphoserine occurs at positions 6, 32, 44, 57, 63, 70, 74, 79, and 91. The segment covering K73–S85 has biased composition (basic and acidic residues). The span at E94 to T104 shows a compositional bias: acidic residues. The residue at position 104 (T104) is a Phosphothreonine. Phosphoserine occurs at positions 105 and 113. The segment covering S105 to D119 has biased composition (basic and acidic residues). 2 stretches are compositionally biased toward acidic residues: residues E120–E131 and Q138–K153. Residues E160 to D185 are compositionally biased toward basic and acidic residues. S168 carries the post-translational modification Phosphoserine. A compositionally biased stretch (acidic residues) spans D186–E202. Basic and acidic residues predominate over residues G203–K212. The segment at R214–V240 adopts a C3H1-type zinc-finger fold. Residues E391–K479 are compositionally biased toward basic and acidic residues. S482 bears the Phosphoserine mark. Residue K505 forms a Glycyl lysine isopeptide (Lys-Gly) (interchain with G-Cter in SUMO2) linkage. Positions K505–R515 are enriched in basic and acidic residues. 3 positions are modified to phosphoserine: S527, S529, and S531. The span at S540 to P601 shows a compositional bias: low complexity. Residues S602–R611 show a composition bias toward pro residues. Residues K617 and K656 each participate in a glycyl lysine isopeptide (Lys-Gly) (interchain with G-Cter in SUMO2) cross-link. The segment covering K656–R665 has biased composition (basic and acidic residues). 2 stretches are compositionally biased toward low complexity: residues G687 to S720 and A731 to A745. Residues K755–P769 show a composition bias toward basic and acidic residues. The span at P773–S804 shows a compositional bias: low complexity. K809 is modified (N6-acetyllysine). K812 participates in a covalent cross-link: Glycyl lysine isopeptide (Lys-Gly) (interchain with G-Cter in SUMO2). A compositionally biased stretch (basic and acidic residues) spans A819–Q836. A phosphoserine mark is found at S837, S846, S862, S887, and S890. Over residues S887–T918 the composition is skewed to low complexity. K902 participates in a covalent cross-link: Glycyl lysine isopeptide (Lys-Gly) (interchain with G-Cter in SUMO2). Positions K915–P944 form a coiled coil.

As to quaternary structure, interacts with ZFC3H1 in a RNase-insensitive manner.

Its subcellular location is the nucleus. The chain is Zinc finger CCCH domain-containing protein 18 (Zc3h18) from Rattus norvegicus (Rat).